The following is a 97-amino-acid chain: Aspartyl/glutamyl-tRNA(Asn/Gln) amidotransferase subunit C (97 aa).

This sequence belongs to the GatC family. Heterotrimer of A, B and C subunits.

The catalysed reaction is L-glutamyl-tRNA(Gln) + L-glutamine + ATP + H2O = L-glutaminyl-tRNA(Gln) + L-glutamate + ADP + phosphate + H(+). It carries out the reaction L-aspartyl-tRNA(Asn) + L-glutamine + ATP + H2O = L-asparaginyl-tRNA(Asn) + L-glutamate + ADP + phosphate + 2 H(+). Allows the formation of correctly charged Asn-tRNA(Asn) or Gln-tRNA(Gln) through the transamidation of misacylated Asp-tRNA(Asn) or Glu-tRNA(Gln) in organisms which lack either or both of asparaginyl-tRNA or glutaminyl-tRNA synthetases. The reaction takes place in the presence of glutamine and ATP through an activated phospho-Asp-tRNA(Asn) or phospho-Glu-tRNA(Gln). In Prochlorococcus marinus (strain MIT 9215), this protein is Aspartyl/glutamyl-tRNA(Asn/Gln) amidotransferase subunit C.